Consider the following 94-residue polypeptide: MANTVFCKKFQKEMEALDRAPLPGAKGQEILQNVSKQAWQEWQHLQTMLINEKQLNLMQSESRKYVMEQMDKFFNNEATDKLAGYVDPDDIKEL.

It belongs to the Fe(2+)-trafficking protein family.

Its function is as follows. Could be a mediator in iron transactions between iron acquisition and iron-requiring processes, such as synthesis and/or repair of Fe-S clusters in biosynthetic enzymes. This Marinomonas sp. (strain MWYL1) protein is Probable Fe(2+)-trafficking protein.